Here is a 150-residue protein sequence, read N- to C-terminus: Major facilitator superfamily domain-containing 14C pseudogene (150 aa).

The interval 1-25 (MSVEPPPELEEKAASEPEAGAMPEK) is disordered. Topologically, residues 1-49 (MSVEPPPELEEKAASEPEAGAMPEKRAGAQAAGSTWLQGFGPPSVYHAA) are extracellular. The helical transmembrane segment at 50-70 (IVIFLEFFAWGLLTTPMLTVL) threads the bilayer. At 71-82 (HETFSQHTFLMN) the chain is on the cytoplasmic side. Residues 83–103 (GLIQGVKGLLSFLSAPLIGAL) traverse the membrane as a helical segment. Over 104–111 (SDVWGRKP) the chain is Extracellular. The helical transmembrane segment at 112-132 (FLLGTVFFTCFPIPLMRISPC) threads the bilayer. The Cytoplasmic portion of the chain corresponds to 133–150 (RVWWRAPVVPATCGRRMA).

It belongs to the major facilitator superfamily.

The protein resides in the membrane. This is Major facilitator superfamily domain-containing 14C pseudogene from Homo sapiens (Human).